A 285-amino-acid polypeptide reads, in one-letter code: Small ribosomal subunit protein uS3 (285 aa).

The region spanning 39–107 (VREFLKKKLK…PVAVNIEEVR (69 aa)) is the KH type-2 domain. The disordered stretch occupies residues 211–285 (GDAPVMRGED…RAAPPAAKGE (75 aa)). Positions 217 to 241 (RGEDRPEDDRRRRNPRGDRPGDRRG) are enriched in basic and acidic residues. The span at 242-255 (PGAGRGGPGAGRGP) shows a compositional bias: gly residues. 2 stretches are compositionally biased toward low complexity: residues 256–267 (ADGASAAPSGDA) and 276–285 (RAAPPAAKGE).

This sequence belongs to the universal ribosomal protein uS3 family. In terms of assembly, part of the 30S ribosomal subunit. Forms a tight complex with proteins S10 and S14.

In terms of biological role, binds the lower part of the 30S subunit head. Binds mRNA in the 70S ribosome, positioning it for translation. The chain is Small ribosomal subunit protein uS3 from Leptothrix cholodnii (strain ATCC 51168 / LMG 8142 / SP-6) (Leptothrix discophora (strain SP-6)).